Consider the following 652-residue polypeptide: MKERTSACRHGTPQKHPDTSEESQAMESVDNLCSQYEEKVRPCIDLIDSLRALGVEQDLALPAIAVIGDQSSGKSSVLEALSGVALPRGSGIVTRCPLVLKLKQLKQGEKWSGKVIYKDTEIEISHPSLVEREINKAQNLIAGEGLKISSDLISLEVSSPHVPDLTLIDLPGITRVAVGDQPADIEHKIKRLITEYIQKQETINLVVVPSNVDIATTEALKMAQEVDPQGDRTIGILTKPDLVDRGTEDKVVDVVRNLVCHLKKGYMIVKCRGQQDIQEQLSLAEALQKEQVFFKEHPQFRVLLEDGKATVPCLAKRLTMELTSHICKSLPILENQINVNHQIASEELQKYGADIPEDDSKRLSFLMNKINVFNKDILSLVQAQENISWEESRLFTKLRNEFLAWNDYIEEHFKKTLGSSEKHSQMEKFESHYRGRELPGFVDYKAFENIIKKEVKALEEPALNMLHRVTTMVKNAFTKVSSNNFGDFLNLHSTAKSKIEDIRFNQEKEAEKLIRLHFQMEHIVYCQDQAYKKALQEIREKEAEKEKSTFGAFQHNSPRKELTTTEMTQHLNAYYQECGRNIGRQIPLIIQYSILQTFGQEMEKAMLQLLQDTSKCNWFLTEQSDSREKKKFLKRRLLRLDEAQRKLAKFSN.

Positions 1-27 (MKERTSACRHGTPQKHPDTSEESQAME) are disordered. Residues 58–331 (DLALPAIAVI…LTSHICKSLP (274 aa)) form the Dynamin-type G domain. A G1 motif region spans residues 68–75 (GDQSSGKS). Residue 68–75 (GDQSSGKS) coordinates GTP. Positions 93-95 (VTR) are G2 motif. Residues 169–172 (DLPG) form a G3 motif region. GTP is bound by residues 169–173 (DLPGI) and 238–241 (TKPD). The interval 238–241 (TKPD) is G4 motif. The segment at 270–273 (KCRG) is G5 motif. Residues 332 to 357 (ILENQINVNHQIASEELQKYGADIPE) are bundle signaling element (BSE). The middle domain stretch occupies residues 357-526 (EDDSKRLSFL…HFQMEHIVYC (170 aa)). A stalk region spans residues 358–622 (DDSKRLSFLM…TSKCNWFLTE (265 aa)). A GED domain is found at 564 to 652 (TTEMTQHLNA…AQRKLAKFSN (89 aa)).

The protein belongs to the TRAFAC class dynamin-like GTPase superfamily. Dynamin/Fzo/YdjA family. As to quaternary structure, homooligomer. Oligomerizes into multimeric filamentous or ring-like structures by virtue of its stalk domain. Oligomerization is critical for GTPase activity, protein stability, and recognition of viral target structures. Interacts with TRPC1, TRPC3, TRPC4, TRPC5, TRPC6 and TRPC7. Interacts with HSPA5. Interacts with TUBB/TUBB5. Interacts with DDX39A and DDX39B. Post-translationally, ISGylated.

The protein resides in the nucleus. The protein localises to the cytoplasm. It is found in the endoplasmic reticulum membrane. It localises to the perinuclear region. Its function is as follows. Interferon-induced dynamin-like GTPase which has antiviral activity against influenza A virus, (IAV) and Thogoto virus (THOV). Inhibits IAV by interfering with the process of primary transcription, probably by affecting the viral polymerase function. In Rattus norvegicus (Rat), this protein is Interferon-induced GTP-binding protein Mx1 (Mx1).